The sequence spans 904 residues: Leucine--tRNA ligase (904 aa).

Positions 49 to 59 match the 'HIGH' region motif; sequence PYPSGDLHIGH. The short motif at 663–667 is the 'KMSKS' region element; it reads TMSKS. ATP is bound at residue lysine 666.

It belongs to the class-I aminoacyl-tRNA synthetase family.

The protein localises to the cytoplasm. The enzyme catalyses tRNA(Leu) + L-leucine + ATP = L-leucyl-tRNA(Leu) + AMP + diphosphate. This chain is Leucine--tRNA ligase, found in Roseiflexus castenholzii (strain DSM 13941 / HLO8).